A 124-amino-acid polypeptide reads, in one-letter code: Sporulation initiation phosphotransferase F (124 aa).

The region spanning 5–119 (KILIVDDQYG…EIRDAVKKYL (115 aa)) is the Response regulatory domain. 4 residues coordinate Mg(2+): Asp-10, Asp-11, Asp-54, and Lys-56. Asp-54 is modified (4-aspartylphosphate).

Requires Mg(2+) as cofactor. Post-translationally, phosphorylated by KinA and KinB. Dephosphorylated by RapA and RapB.

It is found in the cytoplasm. In terms of biological role, key element in the phosphorelay regulating sporulation initiation. Phosphorylation of spo0B during sporulation initiation. The protein is Sporulation initiation phosphotransferase F (spo0F) of Bacillus subtilis (strain 168).